The chain runs to 83 residues: Cytochrome b559 subunit alpha (83 aa).

A helical membrane pass occupies residues 21 to 35 (IIHTITVPMLFLAGW). His23 contributes to the heme binding site.

The protein belongs to the PsbE/PsbF family. As to quaternary structure, heterodimer of an alpha subunit and a beta subunit. PSII is composed of 1 copy each of membrane proteins PsbA, PsbB, PsbC, PsbD, PsbE, PsbF, PsbH, PsbI, PsbJ, PsbK, PsbL, PsbM, PsbT, PsbX, PsbY, PsbZ, Psb30/Ycf12, peripheral proteins PsbO, CyanoQ (PsbQ), PsbU, PsbV and a large number of cofactors. It forms dimeric complexes. Requires heme b as cofactor.

It is found in the cellular thylakoid membrane. Its function is as follows. This b-type cytochrome is tightly associated with the reaction center of photosystem II (PSII). PSII is a light-driven water:plastoquinone oxidoreductase that uses light energy to abstract electrons from H(2)O, generating O(2) and a proton gradient subsequently used for ATP formation. It consists of a core antenna complex that captures photons, and an electron transfer chain that converts photonic excitation into a charge separation. The chain is Cytochrome b559 subunit alpha from Acaryochloris marina (strain MBIC 11017).